A 100-amino-acid polypeptide reads, in one-letter code: Putative protein adenylyltransferase MJ0604 (100 aa).

The GSX(10)DXD motif signature appears at 29 to 43 (GSYARGDYTEESDID). Residues Asp-41 and Asp-43 each coordinate Mg(2+).

This sequence belongs to the MntA antitoxin family. It depends on Mg(2+) as a cofactor.

The enzyme catalyses L-tyrosyl-[protein] + ATP = O-(5'-adenylyl)-L-tyrosyl-[protein] + diphosphate. It carries out the reaction O-(5'-adenylyl)-L-tyrosyl-[protein] + ATP = O-[5'-(adenylyl-(5'-&gt;3')-adenylyl)]-L-tyrosyl-[protein] + diphosphate. Putative antitoxin component of a putative type VII toxin-antitoxin (TA) system. Its cognate toxin might be MJ0605, which it might AMPylate. The polypeptide is Putative protein adenylyltransferase MJ0604 (Methanocaldococcus jannaschii (strain ATCC 43067 / DSM 2661 / JAL-1 / JCM 10045 / NBRC 100440) (Methanococcus jannaschii)).